A 224-amino-acid polypeptide reads, in one-letter code: Ribonuclease HII (224 aa).

An RNase H type-2 domain is found at 33–224 (FHVAGVDEVG…LKERYRNDVS (192 aa)). Positions 39, 40, and 131 each coordinate a divalent metal cation.

It belongs to the RNase HII family. Mn(2+) is required as a cofactor. Mg(2+) serves as cofactor.

The protein localises to the cytoplasm. The enzyme catalyses Endonucleolytic cleavage to 5'-phosphomonoester.. In terms of biological role, endonuclease that specifically degrades the RNA of RNA-DNA hybrids. This Bartonella tribocorum (strain CIP 105476 / IBS 506) protein is Ribonuclease HII.